Reading from the N-terminus, the 135-residue chain is Ribosome-binding factor A (135 aa).

Positions 115–135 are disordered; sequence VNEDKRKQQDSGREEDQAGEE. Residues 116–135 are compositionally biased toward basic and acidic residues; it reads NEDKRKQQDSGREEDQAGEE.

The protein belongs to the RbfA family. As to quaternary structure, monomer. Binds 30S ribosomal subunits, but not 50S ribosomal subunits or 70S ribosomes.

It localises to the cytoplasm. One of several proteins that assist in the late maturation steps of the functional core of the 30S ribosomal subunit. Associates with free 30S ribosomal subunits (but not with 30S subunits that are part of 70S ribosomes or polysomes). Required for efficient processing of 16S rRNA. May interact with the 5'-terminal helix region of 16S rRNA. This Vibrio campbellii (strain ATCC BAA-1116) protein is Ribosome-binding factor A.